Consider the following 252-residue polypeptide: Phosphate import ATP-binding protein PstB 1 (252 aa).

An ABC transporter domain is found at 6-247 (LQIRDLSVYY…PKRKETEDYI (242 aa)). An ATP-binding site is contributed by 38–45 (GPSGSGKS).

The protein belongs to the ABC transporter superfamily. Phosphate importer (TC 3.A.1.7) family. The complex is composed of two ATP-binding proteins (PstB), two transmembrane proteins (PstC and PstA) and a solute-binding protein (PstS).

It is found in the cell membrane. It catalyses the reaction phosphate(out) + ATP + H2O = ADP + 2 phosphate(in) + H(+). In terms of biological role, part of the ABC transporter complex PstSACB involved in phosphate import. Responsible for energy coupling to the transport system. This is Phosphate import ATP-binding protein PstB 1 from Streptococcus pyogenes serotype M1.